A 473-amino-acid chain; its full sequence is ATP synthase subunit beta, chloroplastic (473 aa).

ATP is bound at residue 172–179 (GGAGVGKT).

Belongs to the ATPase alpha/beta chains family. As to quaternary structure, F-type ATPases have 2 components, CF(1) - the catalytic core - and CF(0) - the membrane proton channel. CF(1) has five subunits: alpha(3), beta(3), gamma(1), delta(1), epsilon(1). CF(0) has four main subunits: a(1), b(1), b'(1) and c(9-12).

Its subcellular location is the plastid. The protein resides in the chloroplast thylakoid membrane. The catalysed reaction is ATP + H2O + 4 H(+)(in) = ADP + phosphate + 5 H(+)(out). In terms of biological role, produces ATP from ADP in the presence of a proton gradient across the membrane. The catalytic sites are hosted primarily by the beta subunits. This is ATP synthase subunit beta, chloroplastic from Equisetum arvense (Field horsetail).